A 367-amino-acid chain; its full sequence is MSIVVQSAVTHFRPVMILAGGTGGHIFPGLAVAGVLRARGVPVVWLGAAGKMETHLVPKHGIEIQTIAVSGVRGHGMLALLGAPVRVLPAIFAAMRVLRRYRPRVVVSFGGFAAGPGGIAARLMGLPLIVHEQNRAPGMTNRVLARVARRVLSGFPGSFVAEEVVGNPVRKDIAALPAPGVRFAGRSGPVRLLVLGGSQGARVMNNALPVVLRVLSDSDVAVEVRHQCGEALRAETEGAYAYAGVAARVEPFISDMAAAYSWADLVVCRAGASTLAELCAAGVGSVLIPFPAAVDDHQRRNAEYLVAAGAALLLQQQDRAFYVYLESVLRDLLSNPMRRLAMAEAARGLAKSDAAECIAEIILKESI.

Residues 22–24 (TGG), Asn134, Arg170, Ser198, Ile253, and Gln298 each bind UDP-N-acetyl-alpha-D-glucosamine.

Belongs to the glycosyltransferase 28 family. MurG subfamily.

The protein resides in the cell inner membrane. The catalysed reaction is di-trans,octa-cis-undecaprenyl diphospho-N-acetyl-alpha-D-muramoyl-L-alanyl-D-glutamyl-meso-2,6-diaminopimeloyl-D-alanyl-D-alanine + UDP-N-acetyl-alpha-D-glucosamine = di-trans,octa-cis-undecaprenyl diphospho-[N-acetyl-alpha-D-glucosaminyl-(1-&gt;4)]-N-acetyl-alpha-D-muramoyl-L-alanyl-D-glutamyl-meso-2,6-diaminopimeloyl-D-alanyl-D-alanine + UDP + H(+). The protein operates within cell wall biogenesis; peptidoglycan biosynthesis. Cell wall formation. Catalyzes the transfer of a GlcNAc subunit on undecaprenyl-pyrophosphoryl-MurNAc-pentapeptide (lipid intermediate I) to form undecaprenyl-pyrophosphoryl-MurNAc-(pentapeptide)GlcNAc (lipid intermediate II). This Xylella fastidiosa (strain M23) protein is UDP-N-acetylglucosamine--N-acetylmuramyl-(pentapeptide) pyrophosphoryl-undecaprenol N-acetylglucosamine transferase.